The primary structure comprises 234 residues: 1-(5-phosphoribosyl)-5-[(5-phosphoribosylamino)methylideneamino] imidazole-4-carboxamide isomerase (234 aa).

D9 serves as the catalytic Proton acceptor. D131 (proton donor) is an active-site residue.

The protein belongs to the HisA/HisF family.

Its subcellular location is the cytoplasm. It catalyses the reaction 1-(5-phospho-beta-D-ribosyl)-5-[(5-phospho-beta-D-ribosylamino)methylideneamino]imidazole-4-carboxamide = 5-[(5-phospho-1-deoxy-D-ribulos-1-ylimino)methylamino]-1-(5-phospho-beta-D-ribosyl)imidazole-4-carboxamide. Its pathway is amino-acid biosynthesis; L-histidine biosynthesis; L-histidine from 5-phospho-alpha-D-ribose 1-diphosphate: step 4/9. This chain is 1-(5-phosphoribosyl)-5-[(5-phosphoribosylamino)methylideneamino] imidazole-4-carboxamide isomerase, found in Staphylococcus epidermidis (strain ATCC 12228 / FDA PCI 1200).